Reading from the N-terminus, the 428-residue chain is tRNA(Ile2) 2-agmatinylcytidine synthetase TiaS (428 aa).

Belongs to the TiaS family.

It localises to the cytoplasm. It carries out the reaction cytidine(34) in tRNA(Ile2) + agmatine + ATP + H2O = 2-agmatinylcytidine(34) in tRNA(Ile2) + AMP + 2 phosphate + 2 H(+). Functionally, ATP-dependent agmatine transferase that catalyzes the formation of 2-agmatinylcytidine (agm2C) at the wobble position (C34) of tRNA(Ile2), converting the codon specificity from AUG to AUA. The chain is tRNA(Ile2) 2-agmatinylcytidine synthetase TiaS from Methanosarcina mazei (strain ATCC BAA-159 / DSM 3647 / Goe1 / Go1 / JCM 11833 / OCM 88) (Methanosarcina frisia).